A 721-amino-acid polypeptide reads, in one-letter code: MSATDLASVQAAAPQGSRQILVTSALPYANGQIHIGHLVEYIQTDIWVRTLRMHGHEVYYIGADDTHGTPIMLRAEMEGLTPKQLIDRVWAEHKRDFDSFGVSFDNFYSTDSDENRVLSEKIYVALKENGLIAEREIEQAYDPVKEMFLPDRFIKGECPKCHAKDQYGDSCEVCGSTYLPTDLLNPYSVVSGATPVRKTSTHHFFRLSDPRCESFLRDWVSGLAQPEATNKMREWLGDAGEAKLADWDISRDAPYFGFEIPGAPGKYFYVWLDAPVGYYASFKNLCERKGINFDAWVRPGATAEQYHFIGKDILYFHTLFWPAMLEFSGHRTPTNVFAHGFLTVDGAKMSKSRGTFITAQSYIDTGLNPEWLRYYFAAKLNATMEDIDLNLDDFQARVNSDLVGKYVNIASRAAGFLIKRFDGRVQDSAMNHPLVAKLRSAIDSIAAHYEAREYSRALRQTMELADEVNAYVDGAKPWELAKDPANAVALHETCSVSLEAFRLLSLALKPVMPRVAQAVEAFFGIAPLAWADAAKPLSSAQPINAYQHLMTRVDAKQIDALLAANRGSLQADGAAAAAASGATGAAAAKDAKPAKANAKAAAANAANDGPISIDDFAKIDLRIAKIVACQAVEGSDKLLQLTLDVGEEKTRNVFSGIKSAYQPEQLVGKLTVMVANLAPRKMKFGLSEGMVLAASAADEKAEPGLYILEPHSGAKPGMRVK.

The short motif at 27–37 (PYANGQIHIGH) is the 'HIGH' region element. Residues C158, C161, C171, and C174 each contribute to the Zn(2+) site. The short motif at 348–352 (KMSKS) is the 'KMSKS' region element. Residue K351 coordinates ATP. The 107-residue stretch at 615–721 (DFAKIDLRIA…SGAKPGMRVK (107 aa)) folds into the tRNA-binding domain.

This sequence belongs to the class-I aminoacyl-tRNA synthetase family. MetG type 1 subfamily. In terms of assembly, homodimer. Zn(2+) is required as a cofactor.

It localises to the cytoplasm. The enzyme catalyses tRNA(Met) + L-methionine + ATP = L-methionyl-tRNA(Met) + AMP + diphosphate. In terms of biological role, is required not only for elongation of protein synthesis but also for the initiation of all mRNA translation through initiator tRNA(fMet) aminoacylation. This is Methionine--tRNA ligase from Burkholderia vietnamiensis (strain G4 / LMG 22486) (Burkholderia cepacia (strain R1808)).